The chain runs to 270 residues: Replication protein A 32 kDa subunit (270 aa).

N-acetylmethionine is present on methionine 1. Phosphoserine; by PRKDC is present on residues serine 4 and serine 8. Positions 20 to 41 (YTQSPGGFGSPTPSQAEKKSRV) are disordered. Threonine 21 carries the post-translational modification Phosphothreonine; by PRKDC. Phosphoserine; by CDK2 is present on serine 23. Serine 29 bears the Phosphoserine; by CDK1 mark. Phosphoserine; by PRKDC is present on serine 33. Glycyl lysine isopeptide (Lys-Gly) (interchain with G-Cter in ubiquitin) cross-links involve residues lysine 37 and lysine 38. A DNA-binding region (OB) is located at residues 74 to 148 (VTIVGIIRHA…KSLVAFKIIP (75 aa)). The segment at 171-192 (KPNSQASAGRPSMSNPGMSEPG) is disordered. Residues 187 to 270 (GMSEPGNFSG…DDHFKSTDAE (84 aa)) form an interaction with RAD52, TIPIN, UNG and XPA region.

It belongs to the replication factor A protein 2 family. In terms of assembly, component of the replication protein A complex (RPA/RP-A), a heterotrimeric complex composed of RPA1, RPA2 and RPA3. Interacts with PRPF19; the PRP19-CDC5L complex is recruited to the sites of DNA repair where it ubiquitinates the replication protein A complex (RPA). Interacts with SERTAD3. Interacts with TIPIN. Interacts with TIMELESS. Interacts with PPP4R2; the interaction is direct, DNA damage-dependent and mediates the recruitment of the PP4 catalytic subunit PPP4C. Interacts (hyperphosphorylated) with RAD51. Interacts with SMARCAL1; the interaction is direct and mediates the recruitment to the RPA complex of SMARCAL1. Interacts with RAD52 and XPA; those interactions are direct and associate RAD52 and XPA to the RPA complex. Interacts with FBH1. Interacts with ETAA1; the interaction is direct and promotes ETAA1 recruitment at stalled replication forks. Interacts with DDI2. Interacts (in unphosphorylated form via N-terminus) with EIF4EBP3; the interaction enhances EIF4EBP3-mediated inhibition of EIF4E-mediated mRNA nuclear export. Interacts with nuclear UNG (isoform 2); this interaction mediates UNG recruitment to RPA-coated single-stranded DNA at stalled replication forks. In terms of processing, differentially phosphorylated throughout the cell cycle, becoming phosphorylated at the G1-S transition and dephosphorylated in late mitosis. Mainly phosphorylated at Ser-23 and Ser-29, by cyclin A-CDK2 and cyclin B-CDK1, respectively during DNA replication and mitosis. Dephosphorylation may require the serine/threonine-protein phosphatase 4. Phosphorylation at Ser-23 and Ser-29 is a prerequisite for further phosphorylation. Becomes hyperphosphorylated on additional residues including Ser-4, Ser-8, Thr-21 and Ser-33 in response to DNA damage. Hyperphosphorylation is mediated by ATM, ATR and PRKDC. Primarily recruited to DNA repair nuclear foci as a hypophosphorylated form it undergoes subsequent hyperphosphorylation, catalyzed by ATR. Hyperphosphorylation is required for RAD51 recruitment to chromatin and efficient DNA repair. Phosphorylation at Thr-21 depends upon RFWD3 presence. DNA damage-induced 'Lys-63'-linked polyubiquitination by PRPF19 mediates ATRIP recruitment to the RPA complex at sites of DNA damage and activation of ATR. Ubiquitinated by RFWD3 at stalled replication forks in response to DNA damage: ubiquitination by RFWD3 does not lead to degradation by the proteasome and promotes removal of the RPA complex from stalled replication forks, promoting homologous recombination.

It is found in the nucleus. The protein localises to the PML body. Functionally, as part of the heterotrimeric replication protein A complex (RPA/RP-A), binds and stabilizes single-stranded DNA intermediates, that form during DNA replication or upon DNA stress. It prevents their reannealing and in parallel, recruits and activates different proteins and complexes involved in DNA metabolism. Thereby, it plays an essential role both in DNA replication and the cellular response to DNA damage. In the cellular response to DNA damage, the RPA complex controls DNA repair and DNA damage checkpoint activation. Through recruitment of ATRIP activates the ATR kinase a master regulator of the DNA damage response. It is required for the recruitment of the DNA double-strand break repair factors RAD51 and RAD52 to chromatin in response to DNA damage. Also recruits to sites of DNA damage proteins like XPA and XPG that are involved in nucleotide excision repair and is required for this mechanism of DNA repair. Also plays a role in base excision repair (BER) probably through interaction with UNG. Also recruits SMARCAL1/HARP, which is involved in replication fork restart, to sites of DNA damage. May also play a role in telomere maintenance. This Mus musculus (Mouse) protein is Replication protein A 32 kDa subunit.